We begin with the raw amino-acid sequence, 462 residues long: Kinetochore protein nsk1 (462 aa).

The span at P104–D120 shows a compositional bias: polar residues. Disordered regions lie at residues P104–I161, E180–T240, and N320–S462. Basic and acidic residues predominate over residues N121–K138. Polar residues predominate over residues G146–T156. A compositionally biased stretch (basic and acidic residues) spans E180–K189. Positions K229–T240 are enriched in polar residues. Residues K324 to G333 are compositionally biased toward basic and acidic residues. Residues W422–D444 show a composition bias toward polar residues. The segment covering H449–S462 has biased composition (basic residues).

Interacts with dlc1. The dlc1-nsk1 complex seems to oligomerize in chain-like structures. Also binds directly to spindle microtubules. Post-translationally, phosphorylated by cdk1 at prometaphase arrest. Phosphorylation prevents nsk1 kinetochore and spindle targeting. Dephosphorylated by clp1 at anaphase onset controls its relocalization.

The protein resides in the nucleus. The protein localises to the nucleolus. It localises to the cytoplasm. It is found in the cytoskeleton. Its subcellular location is the spindle. The protein resides in the chromosome. The protein localises to the centromere. It localises to the kinetochore. Its function is as follows. Ensures chromosome alignment and accurate chromosome segregation during mitosis. Promotes proper kinetochore-microtubule (k-MT) interactions during anaphase B. The phosphorylation status of nsk1 affects the proper k-MT coupling, ensuring that it interacts stably only at the correct time during mitosis. The protein is Kinetochore protein nsk1 (nsk1) of Schizosaccharomyces pombe (strain 972 / ATCC 24843) (Fission yeast).